A 263-amino-acid polypeptide reads, in one-letter code: Transmembrane protein 176B (263 aa).

4 consecutive transmembrane segments (helical) span residues 61–81, 89–109, 125–145, and 197–217; these read LGVTQILLGLVSCVLGVCLYF, ASGCAFWSGSVAILAGVGIVI, LLLACSATAAAATVMGVKSLI, and LFLAFCILFTVICILKIVVSV. The segment at 242–263 is disordered; that stretch reads KKLLGGDSAPASPTKEKIPVTP. Phosphoserine occurs at positions 249 and 253.

This sequence belongs to the TMEM176 family. Expressed in spleen by a variety of myeloid cells including macrophages and dendritic cells (at protein level). Ubiquitously expressed with higher expression in lymphoid tissues.

It is found in the nucleus membrane. Functionally, required for the development of cerebellar granule cells. May play a role in the process of maturation of dendritic cells. The sequence is that of Transmembrane protein 176B (Tmem176b) from Rattus norvegicus (Rat).